An 853-amino-acid polypeptide reads, in one-letter code: Envelope glycoprotein gp160 (853 aa).

Residues 1–31 form the signal peptide; that stretch reads MRARGIERNCQNWWKWGIMLLGILMTCSAAD. The Extracellular segment spans residues 32–681; sequence NLWVTVYYGV…ITQWLWYIKI (650 aa). Cys-53 and Cys-73 are joined by a disulfide. N-linked (GlcNAc...) asparagine; by host glycans are attached at residues Asn-87, Asn-129, Asn-137, Asn-143, Asn-153, Asn-157, Asn-183, Asn-188, Asn-198, Asn-235, Asn-242, Asn-263, Asn-277, and Asn-290. Intrachain disulfides connect Cys-118/Cys-206, Cys-125/Cys-197, Cys-130/Cys-154, Cys-219/Cys-248, and Cys-229/Cys-240. Positions 130–153 are V1; sequence CSDELRNNGTMGNNVTTEEKGMKN. Residues 154 to 197 are V2; sequence CSFNVTTVLKDKKQQVYALFYRLDIVPIDNDSSTNSTNYRLINC. A V3 region spans residues 297–329; sequence CARPYQNTRQRTPIGLGQSLYTTRSRSIIGQAH. Cys-297 and Cys-330 are oxidised to a cystine. 2 N-linked (GlcNAc...) asparagine; by host glycosylation sites follow: Asn-331 and Asn-353. Residues 362 to 372 are CD4-binding loop; sequence SSGGDPEITTH. Disulfide bonds link Cys-376–Cys-442 and Cys-383–Cys-416. The tract at residues 383–416 is V4; that stretch reads CNTSGLFNSTWNISAWNNITESNNSTNTNITLQC. Residues Asn-384, Asn-390, Asn-394, Asn-400, Asn-405, Asn-406, Asn-411, Asn-445, Asn-458, Asn-459, and Asn-462 are each glycosylated (N-linked (GlcNAc...) asparagine; by host). 2 V5 regions span residues 457–468 and 460–468; these read INNSTNETFRPG and STNETFRPG. Residues 509 to 529 are fusion peptide; sequence AIGLGAMFLGFLGAAGSTMGA. An immunosuppression region spans residues 571-589; that stretch reads KQLQARILAVERYLKDQQL. Residues Cys-595 and Cys-601 are joined by a disulfide bond. Residues Asn-608, Asn-613, Asn-622, and Asn-634 are each glycosylated (N-linked (GlcNAc...) asparagine; by host). A coiled-coil region spans residues 630 to 664; it reads REIDNYTGLIYSLIEESQTQQEKNEKELLELDKWA. Residues 659–680 are MPER; binding to GalCer; sequence ELDKWASLWNWFSITQWLWYIK. A helical transmembrane segment spans residues 682–702; the sequence is FIMIIGGLIGLRIVFAVLSLV. The Cytoplasmic portion of the chain corresponds to 703–853; sequence NRVRQGYSPL…IRQGLERSLL (151 aa). Positions 709–712 match the YXXL motif; contains endocytosis signal motif; that stretch reads YSPL. Residues 716 to 738 are disordered; that stretch reads TLLPAPRGPDRPEGTEEEGGERG. Over residues 723 to 738 the composition is skewed to basic and acidic residues; that stretch reads GPDRPEGTEEEGGERG. Residues Cys-761 and Cys-834 are each lipidated (S-palmitoyl cysteine; by host). Positions 852–853 match the Di-leucine internalization motif motif; it reads LL.

The protein belongs to the HIV-1 env protein family. The mature envelope protein (Env) consists of a homotrimer of non-covalently associated gp120-gp41 heterodimers. The resulting complex protrudes from the virus surface as a spike. There seems to be as few as 10 spikes on the average virion. Interacts with host CD4, CCR5 and CXCR4. Gp120 also interacts with the C-type lectins CD209/DC-SIGN and CLEC4M/DC-SIGNR (collectively referred to as DC-SIGN(R)). Gp120 and gp41 interact with GalCer. Gp120 interacts with host ITGA4/ITGB7 complex; on CD4+ T-cells, this interaction results in rapid activation of integrin ITGAL/LFA-1, which facilitates efficient cell-to-cell spreading of HIV-1. Gp120 interacts with cell-associated heparan sulfate; this interaction increases virus infectivity on permissive cells and may be involved in infection of CD4- cells. As to quaternary structure, the mature envelope protein (Env) consists of a homotrimer of non-covalently associated gp120-gp41 heterodimers. The resulting complex protrudes from the virus surface as a spike. There seems to be as few as 10 spikes on the average virion. In terms of processing, highly glycosylated by host. The high number of glycan on the protein is reffered to as 'glycan shield' because it contributes to hide protein sequence from adaptive immune system. Palmitoylation of the transmembrane protein and of Env polyprotein (prior to its proteolytic cleavage) is essential for their association with host cell membrane lipid rafts. Palmitoylation is therefore required for envelope trafficking to classical lipid rafts, but not for viral replication. Post-translationally, specific enzymatic cleavages in vivo yield mature proteins. Envelope glycoproteins are synthesized as an inactive precursor that is heavily N-glycosylated and processed likely by host cell furin in the Golgi to yield the mature SU and TM proteins. The cleavage site between SU and TM requires the minimal sequence [KR]-X-[KR]-R. About 2 of the 9 disulfide bonds of gp41 are reduced by P4HB/PDI, following binding to CD4 receptor.

The protein localises to the virion membrane. It localises to the host cell membrane. Its subcellular location is the host endosome membrane. Oligomerizes in the host endoplasmic reticulum into predominantly trimers. In a second time, gp160 transits in the host Golgi, where glycosylation is completed. The precursor is then proteolytically cleaved in the trans-Golgi and thereby activated by cellular furin or furin-like proteases to produce gp120 and gp41. Functionally, attaches the virus to the host lymphoid cell by binding to the primary receptor CD4. This interaction induces a structural rearrangement creating a high affinity binding site for a chemokine coreceptor like CXCR4 and/or CCR5. Acts as a ligand for CD209/DC-SIGN and CLEC4M/DC-SIGNR, which are respectively found on dendritic cells (DCs), and on endothelial cells of liver sinusoids and lymph node sinuses. These interactions allow capture of viral particles at mucosal surfaces by these cells and subsequent transmission to permissive cells. HIV subverts the migration properties of dendritic cells to gain access to CD4+ T-cells in lymph nodes. Virus transmission to permissive T-cells occurs either in trans (without DCs infection, through viral capture and transmission), or in cis (following DCs productive infection, through the usual CD4-gp120 interaction), thereby inducing a robust infection. In trans infection, bound virions remain infectious over days and it is proposed that they are not degraded, but protected in non-lysosomal acidic organelles within the DCs close to the cell membrane thus contributing to the viral infectious potential during DCs' migration from the periphery to the lymphoid tissues. On arrival at lymphoid tissues, intact virions recycle back to DCs' cell surface allowing virus transmission to CD4+ T-cells. In terms of biological role, acts as a class I viral fusion protein. Under the current model, the protein has at least 3 conformational states: pre-fusion native state, pre-hairpin intermediate state, and post-fusion hairpin state. During fusion of viral and target intracellular membranes, the coiled coil regions (heptad repeats) assume a trimer-of-hairpins structure, positioning the fusion peptide in close proximity to the C-terminal region of the ectodomain. The formation of this structure appears to drive apposition and subsequent fusion of viral and target cell membranes. Complete fusion occurs in host cell endosomes and is dynamin-dependent, however some lipid transfer might occur at the plasma membrane. The virus undergoes clathrin-dependent internalization long before endosomal fusion, thus minimizing the surface exposure of conserved viral epitopes during fusion and reducing the efficacy of inhibitors targeting these epitopes. Membranes fusion leads to delivery of the nucleocapsid into the cytoplasm. This is Envelope glycoprotein gp160 from Human immunodeficiency virus type 1 group M subtype D (isolate ELI) (HIV-1).